A 323-amino-acid polypeptide reads, in one-letter code: MAETTWNRHHVLSLADFSADELNIVLQTANSFKDVLYRKTKKVPTLQARLVTNLFFEPSTRTRSSFELAAKRLSADVLNFSPGTSSLSKGETILDTAKTFLAMGADMMVIRHQHSGVPQMIAQAMDDLGEQVGVLNAGDGFHEHPSQGLLDLFTLCTTLDPDQPTTHLLTGKKIAIVGDILHSRVARSNLSSLVTCGADVHLAGPPTLLPKEFADYGAQVHWSLEPALEQADFVMTLRLQHERMSQHLIPSIREYHQQFGITRDRIQRCQPQVKVLHPGPVNRGVEISSDLMDDESLSLIPHQVTSGIAVRMALLYLISNRSR.

Positions 61 and 62 each coordinate carbamoyl phosphate. Lysine 89 serves as a coordination point for L-aspartate. Positions 111, 144, and 147 each coordinate carbamoyl phosphate. Arginine 184 and arginine 238 together coordinate L-aspartate. Residues glycine 279 and proline 280 each contribute to the carbamoyl phosphate site.

It belongs to the aspartate/ornithine carbamoyltransferase superfamily. ATCase family. As to quaternary structure, heterododecamer (2C3:3R2) of six catalytic PyrB chains organized as two trimers (C3), and six regulatory PyrI chains organized as three dimers (R2).

The enzyme catalyses carbamoyl phosphate + L-aspartate = N-carbamoyl-L-aspartate + phosphate + H(+). The protein operates within pyrimidine metabolism; UMP biosynthesis via de novo pathway; (S)-dihydroorotate from bicarbonate: step 2/3. Functionally, catalyzes the condensation of carbamoyl phosphate and aspartate to form carbamoyl aspartate and inorganic phosphate, the committed step in the de novo pyrimidine nucleotide biosynthesis pathway. This chain is Aspartate carbamoyltransferase catalytic subunit, found in Acaryochloris marina (strain MBIC 11017).